A 317-amino-acid polypeptide reads, in one-letter code: Putative 2-hydroxyacid dehydrogenase SAB2178 (317 aa).

NAD(+) is bound by residues 155-156 (EI), 234-236 (ASR), and Asp-260. The active site involves Arg-236. Glu-265 is a catalytic residue. Residue His-283 is the Proton donor of the active site. 283–286 (HIGN) contacts NAD(+).

It belongs to the D-isomer specific 2-hydroxyacid dehydrogenase family.

This is Putative 2-hydroxyacid dehydrogenase SAB2178 from Staphylococcus aureus (strain bovine RF122 / ET3-1).